Here is a 70-residue protein sequence, read N- to C-terminus: UPF0426 protein ssl0294 (70 aa).

The protein belongs to the UPF0426 family.

The polypeptide is UPF0426 protein ssl0294 (Synechocystis sp. (strain ATCC 27184 / PCC 6803 / Kazusa)).